Reading from the N-terminus, the 541-residue chain is Chaperonin GroEL 2 (541 aa).

ATP contacts are provided by residues 29 to 32 (TLGP), 86 to 90 (DGTTT), Gly414, 478 to 480 (DAA), and Asp494.

It belongs to the chaperonin (HSP60) family. In terms of assembly, forms a cylinder of 14 subunits composed of two heptameric rings stacked back-to-back. Interacts with the co-chaperonin GroES.

It is found in the cytoplasm. The enzyme catalyses ATP + H2O + a folded polypeptide = ADP + phosphate + an unfolded polypeptide.. Its function is as follows. Together with its co-chaperonin GroES, plays an essential role in assisting protein folding. The GroEL-GroES system forms a nano-cage that allows encapsulation of the non-native substrate proteins and provides a physical environment optimized to promote and accelerate protein folding. The protein is Chaperonin GroEL 2 of Frankia casuarinae (strain DSM 45818 / CECT 9043 / HFP020203 / CcI3).